The chain runs to 102 residues: UPF0213 protein XCC3072 (102 aa).

The region spanning K5–A80 is the GIY-YIG domain.

Belongs to the UPF0213 family.

The sequence is that of UPF0213 protein XCC3072 from Xanthomonas campestris pv. campestris (strain ATCC 33913 / DSM 3586 / NCPPB 528 / LMG 568 / P 25).